A 596-amino-acid chain; its full sequence is Phosphoenolpyruvate carboxykinase [GTP] (596 aa).

Substrate-binding positions include R77 and 205–207 (YGG). Mn(2+) contacts are provided by K214 and H234. S256 lines the substrate pocket. GTP is bound at residue 257–262 (ACGKTN). Residue C258 is part of the active site. Mn(2+) is bound at residue D283. Positions 362–388 (KKGSTEKAAHPNSRFTAPAKNNPAISP) are disordered. 373–375 (NSR) is a substrate binding site. GTP-binding positions include R375, R406, and 499–502 (YGDN).

This sequence belongs to the phosphoenolpyruvate carboxykinase [GTP] family. In terms of assembly, monomer. Mn(2+) is required as a cofactor.

The protein resides in the cytoplasm. The enzyme catalyses oxaloacetate + GTP = phosphoenolpyruvate + GDP + CO2. Its pathway is carbohydrate biosynthesis; gluconeogenesis. In terms of biological role, catalyzes the conversion of oxaloacetate (OAA) to phosphoenolpyruvate (PEP), the rate-limiting step in the metabolic pathway that produces glucose from lactate and other precursors derived from the citric acid cycle. The sequence is that of Phosphoenolpyruvate carboxykinase [GTP] from Anaeromyxobacter dehalogenans (strain 2CP-1 / ATCC BAA-258).